The chain runs to 250 residues: Tripartite motif-containing protein 73 (250 aa).

An RING-type zinc finger spans residues Cys16 to Trp57. A B box-type zinc finger spans residues Pro84–Val125. Zn(2+) is bound by residues Cys89, His92, Cys111, and His117. Coiled-coil stretches lie at residues Val125–Asp169 and Leu204–Glu235.

Belongs to the TRIM/RBCC family.

The protein is Tripartite motif-containing protein 73 (TRIM73) of Homo sapiens (Human).